The sequence spans 654 residues: DNA ligase (654 aa).

NAD(+) contacts are provided by residues 31–35 (DSEYD), 80–81 (SL), and glutamate 109. The active-site N6-AMP-lysine intermediate is lysine 111. Residues arginine 132, glutamate 166, lysine 280, and lysine 304 each coordinate NAD(+). Zn(2+) contacts are provided by cysteine 398, cysteine 401, cysteine 416, and cysteine 421. The BRCT domain occupies 579 to 654 (NIEGILSGKT…IWSEQDLLDL (76 aa)).

Belongs to the NAD-dependent DNA ligase family. LigA subfamily. Mg(2+) is required as a cofactor. The cofactor is Mn(2+).

The enzyme catalyses NAD(+) + (deoxyribonucleotide)n-3'-hydroxyl + 5'-phospho-(deoxyribonucleotide)m = (deoxyribonucleotide)n+m + AMP + beta-nicotinamide D-nucleotide.. Its function is as follows. DNA ligase that catalyzes the formation of phosphodiester linkages between 5'-phosphoryl and 3'-hydroxyl groups in double-stranded DNA using NAD as a coenzyme and as the energy source for the reaction. It is essential for DNA replication and repair of damaged DNA. The polypeptide is DNA ligase (Lactococcus lactis subsp. lactis (strain IL1403) (Streptococcus lactis)).